Here is a 211-residue protein sequence, read N- to C-terminus: Small ribosomal subunit protein uS3 (211 aa).

The KH type-2 domain maps to 38–106 (LRNFLKKRLF…EIYLNIQEVR (69 aa)).

This sequence belongs to the universal ribosomal protein uS3 family. Part of the 30S ribosomal subunit. Forms a tight complex with proteins S10 and S14.

Its function is as follows. Binds the lower part of the 30S subunit head. Binds mRNA in the 70S ribosome, positioning it for translation. In Geobacter metallireducens (strain ATCC 53774 / DSM 7210 / GS-15), this protein is Small ribosomal subunit protein uS3.